Here is a 158-residue protein sequence, read N- to C-terminus: MELSAIGEQVFAVESIRKKRVRKGKVEYLVKWKGWPPKYSTWEPEEHILDPRLVMAYEEKEERDRASGYRKRGPKPRRLLLQESAAPDVVQTPGDWEPMEQAPEEEAEADLTNGPPPWTPTLPSSEVTVTDITANSVTVTFREAQAAEGFFRDRNEKL.

The Chromo domain maps to 11–69; sequence FAVESIRKKRVRKGKVEYLVKWKGWPPKYSTWEPEEHILDPRLVMAYEEKEERDRASGY. The interval 60 to 127 is disordered; it reads KEERDRASGY…WTPTLPSSEV (68 aa). Residues 68 to 78 show a composition bias toward basic residues; sequence GYRKRGPKPRR.

As to quaternary structure, component of a PRC1-like complex. Distinct PRC1-like core complexes are composed of a RING1 subunit (RING1B or RING1A), one of the six PCGF proteins (PCGF1-6), one PHC protein (PHC1-3) and one of the CBX proteins (CBX2, CBX4, CBX6, CBX7 or CBX8). The composition of the PRC1 complex may differ between the PRC1 complex in pluripotent embryonic stem cells containing RNF2, CBX7 and PCGF2, and the PRC1 complex in differentiating cells containing RNF2, CBX2, CBX4 and BMI1. Interacts with RING1. Interacts with RNF2, PHC1 and PCGF2. Interacts (via chromodomain) with histone H3K9Me3 and H3K27me3. Interacts with H3K9Me2 and H4K20Me1. Interacts (via chromodomain) with single-stranded and double-stranded RNA; RNA binding seems to be required for the localization to chromatin. Interacts with PCGF1, PCGF3, PCGF5 and PCGF6. In terms of tissue distribution, expressed in embryonic stem cells.

Its subcellular location is the nucleus. The protein localises to the chromosome. Its function is as follows. Component of a Polycomb group (PcG) multiprotein PRC1-like complex, a complex class required to maintain the transcriptionally repressive state of many genes, including Hox genes, throughout development. PcG PRC1 complex acts via chromatin remodeling and modification of histones; it mediates monoubiquitination of histone H2A 'Lys-119', rendering chromatin heritably changed in its expressibility. Promotes histone H3 trimethylation at 'Lys-9' (H3K9me3). Binds to histone H3 trimethylated at 'Lys-9' (H3K9me3) or at 'Lys-27' (H3K27me3). Trimethylation at 'Lys-27' (H3K27me3) is important for chromatin recruitment. May possibly also bind trimethylated lysine residues in other proteins (in vitro). Binds non-coding, single-stranded RNA and double-stranded RNA. Plays a role in the timely repression of differentiation-specific genes in pluripotent embryonic stem cells to maintain the undifferentiated state. Regulator of cellular lifespan by maintaining the repression of CDKN2A, but not by inducing telomerase activity. The sequence is that of Chromobox protein homolog 7 (Cbx7) from Mus musculus (Mouse).